The primary structure comprises 274 residues: NH(3)-dependent NAD(+) synthetase (274 aa).

46-53 (GISGGQDS) is a binding site for ATP. D52 contacts Mg(2+). R140 serves as a coordination point for deamido-NAD(+). T160 is an ATP binding site. E165 is a Mg(2+) binding site. Deamido-NAD(+) is bound by residues K173 and D180. Residues K189 and T211 each contribute to the ATP site. Residue 260 to 261 (HK) participates in deamido-NAD(+) binding.

It belongs to the NAD synthetase family. As to quaternary structure, homodimer.

It catalyses the reaction deamido-NAD(+) + NH4(+) + ATP = AMP + diphosphate + NAD(+) + H(+). Its pathway is cofactor biosynthesis; NAD(+) biosynthesis; NAD(+) from deamido-NAD(+) (ammonia route): step 1/1. Its function is as follows. Catalyzes the ATP-dependent amidation of deamido-NAD to form NAD. Uses ammonia as a nitrogen source. The chain is NH(3)-dependent NAD(+) synthetase from Streptococcus suis (strain 05ZYH33).